A 219-amino-acid chain; its full sequence is Probable oxidoreductase virH (219 aa).

The protein belongs to the oxidoreductase OpS7 family.

Its pathway is secondary metabolite biosynthesis. Its function is as follows. Probable oxidoreductase; part of the gene cluster that mediates the biosynthesis of virensols and trichoxide, fungal natural products that contain or are derived from a salicylaldehyde core. The pathway begins with the synthesis of the reduced chain in virensol C by the highly reducing polyketide synthase virA via condensation of one acetate and 8 malonate units. VirA has interesting programming rules since the first 2 ketides are fully reduced, the 3 following ketides undergo beta-dehydration, and the last 3 ketides are only reduced to beta-hydroxys to yield the trihydroxy portion. The production of aldehyde virensol C by virA alone is surprising, since virA does not contain a reductase (R) domain that is typically associated with reductive product release in HRPKS. The cupin-domain enzyme virC is involved in enhancing virA product turnover. The short-chain dehydrogenase virB then oxidizes the C-7 alcohol of virensol C to a ketone, yielding virensol D. Virensol D is further transformed to salicylaldehyde 5-deoxyaurocitrin by the short-chain dehydrogenase virD. VirD catalyzes the dehydrogenation of C-3 to form the beta-ketone aldehyde, which is followed by the generation of the nucleophilic C-2 that is required for the intramolecular aldol condensation between C-2 and C-7, itself followed by dehydration and aromatization which leads to salicylaldehyde 5-deoxyaurocitrin. While the dehydrogenation of virensol D is definitely catalyzed by virD, the aldol condensation and dehydration may be uncatalyzed or assisted by virD. The short chain dehydrogenase virG then converts salicylaldehyde 5-deoxyaurocitrin into virensol B which is further hydroxylated by the cytochrome P450 monooxygenase virE to yield the hydroquinone virensol A. VirI then may oxidize virensol A to form the quinone, while virH performs the epoxidation. Finally, the two remaining short-chain dehydrogenases, virK and virL, are probably responsible for reducing the ketones to the corresponding alcohols to furnish the epoxycyclohexanol structure in trichoxide. This Hypocrea virens (strain Gv29-8 / FGSC 10586) (Gliocladium virens) protein is Probable oxidoreductase virH.